Consider the following 487-residue polypeptide: Chromosomal replication initiator protein DnaA (487 aa).

Positions 1–71 (MMHDALFERF…TSLVQSEDPD (71 aa)) are domain I, interacts with DnaA modulators. The interval 71-141 (DVLKVEILVR…QGGSGPLFGS (71 aa)) is domain II. The tract at residues 142–364 (PLDTRFTFDT…GAFNQLMFRR (223 aa)) is domain III, AAA+ region. G188, G190, K191, and T192 together coordinate ATP. The interval 365–487 (SFEPNLSVDR…LKRLINENNA (123 aa)) is domain IV, binds dsDNA.

The protein belongs to the DnaA family. As to quaternary structure, oligomerizes as a right-handed, spiral filament on DNA at oriC.

It localises to the cytoplasm. In terms of biological role, plays an essential role in the initiation and regulation of chromosomal replication. ATP-DnaA binds to the origin of replication (oriC) to initiate formation of the DNA replication initiation complex once per cell cycle. Binds the DnaA box (a 9 base pair repeat at the origin) and separates the double-stranded (ds)DNA. Forms a right-handed helical filament on oriC DNA; dsDNA binds to the exterior of the filament while single-stranded (ss)DNA is stabiized in the filament's interior. The ATP-DnaA-oriC complex binds and stabilizes one strand of the AT-rich DNA unwinding element (DUE), permitting loading of DNA polymerase. After initiation quickly degrades to an ADP-DnaA complex that is not apt for DNA replication. Binds acidic phospholipids. This Agrobacterium fabrum (strain C58 / ATCC 33970) (Agrobacterium tumefaciens (strain C58)) protein is Chromosomal replication initiator protein DnaA.